We begin with the raw amino-acid sequence, 171 residues long: 3-hydroxydecanoyl-[acyl-carrier-protein] dehydratase (171 aa).

His71 is a catalytic residue.

This sequence belongs to the thioester dehydratase family. FabA subfamily. Homodimer.

The protein resides in the cytoplasm. The catalysed reaction is a (3R)-hydroxyacyl-[ACP] = a (2E)-enoyl-[ACP] + H2O. The enzyme catalyses (3R)-hydroxydecanoyl-[ACP] = (2E)-decenoyl-[ACP] + H2O. It carries out the reaction (2E)-decenoyl-[ACP] = (3Z)-decenoyl-[ACP]. It functions in the pathway lipid metabolism; fatty acid biosynthesis. Its function is as follows. Necessary for the introduction of cis unsaturation into fatty acids. Catalyzes the dehydration of (3R)-3-hydroxydecanoyl-ACP to E-(2)-decenoyl-ACP and then its isomerization to Z-(3)-decenoyl-ACP. Can catalyze the dehydratase reaction for beta-hydroxyacyl-ACPs with saturated chain lengths up to 16:0, being most active on intermediate chain length. This is 3-hydroxydecanoyl-[acyl-carrier-protein] dehydratase from Hamiltonella defensa subsp. Acyrthosiphon pisum (strain 5AT).